The following is a 323-amino-acid chain: Aspartate carbamoyltransferase catalytic subunit (323 aa).

2 residues coordinate carbamoyl phosphate: Arg61 and Thr62. An L-aspartate-binding site is contributed by Lys89. Carbamoyl phosphate is bound by residues Arg111, His144, and Gln147. L-aspartate is bound by residues Arg184 and Arg238. Gly279 and Pro280 together coordinate carbamoyl phosphate.

Belongs to the aspartate/ornithine carbamoyltransferase superfamily. ATCase family. In terms of assembly, heterododecamer (2C3:3R2) of six catalytic PyrB chains organized as two trimers (C3), and six regulatory PyrI chains organized as three dimers (R2).

It carries out the reaction carbamoyl phosphate + L-aspartate = N-carbamoyl-L-aspartate + phosphate + H(+). Its pathway is pyrimidine metabolism; UMP biosynthesis via de novo pathway; (S)-dihydroorotate from bicarbonate: step 2/3. Its function is as follows. Catalyzes the condensation of carbamoyl phosphate and aspartate to form carbamoyl aspartate and inorganic phosphate, the committed step in the de novo pyrimidine nucleotide biosynthesis pathway. In Acaryochloris marina (strain MBIC 11017), this protein is Aspartate carbamoyltransferase catalytic subunit.